Consider the following 427-residue polypeptide: UDP-N-acetylglucosamine 1-carboxyvinyltransferase 1 (427 aa).

23 to 24 (KN) lines the phosphoenolpyruvate pocket. A UDP-N-acetyl-alpha-D-glucosamine-binding site is contributed by Arg-96. The active-site Proton donor is Cys-120. The residue at position 120 (Cys-120) is a 2-(S-cysteinyl)pyruvic acid O-phosphothioketal. UDP-N-acetyl-alpha-D-glucosamine is bound by residues 125–129 (RPIDL), Asp-309, and Val-331.

Belongs to the EPSP synthase family. MurA subfamily.

The protein localises to the cytoplasm. It catalyses the reaction phosphoenolpyruvate + UDP-N-acetyl-alpha-D-glucosamine = UDP-N-acetyl-3-O-(1-carboxyvinyl)-alpha-D-glucosamine + phosphate. Its pathway is cell wall biogenesis; peptidoglycan biosynthesis. In terms of biological role, cell wall formation. Adds enolpyruvyl to UDP-N-acetylglucosamine. This is UDP-N-acetylglucosamine 1-carboxyvinyltransferase 1 from Streptococcus pneumoniae serotype 4 (strain ATCC BAA-334 / TIGR4).